The sequence spans 154 residues: 6,7-dimethyl-8-ribityllumazine synthase (154 aa).

Residues phenylalanine 15, 47-49 (TFD), and 71-73 (AVI) contribute to the 5-amino-6-(D-ribitylamino)uracil site. (2S)-2-hydroxy-3-oxobutyl phosphate is bound at residue 76-77 (ET). Histidine 79 serves as the catalytic Proton donor. Leucine 104 provides a ligand contact to 5-amino-6-(D-ribitylamino)uracil. Arginine 119 is a binding site for (2S)-2-hydroxy-3-oxobutyl phosphate.

Belongs to the DMRL synthase family.

The catalysed reaction is (2S)-2-hydroxy-3-oxobutyl phosphate + 5-amino-6-(D-ribitylamino)uracil = 6,7-dimethyl-8-(1-D-ribityl)lumazine + phosphate + 2 H2O + H(+). It participates in cofactor biosynthesis; riboflavin biosynthesis; riboflavin from 2-hydroxy-3-oxobutyl phosphate and 5-amino-6-(D-ribitylamino)uracil: step 1/2. Its function is as follows. Catalyzes the formation of 6,7-dimethyl-8-ribityllumazine by condensation of 5-amino-6-(D-ribitylamino)uracil with 3,4-dihydroxy-2-butanone 4-phosphate. This is the penultimate step in the biosynthesis of riboflavin. This chain is 6,7-dimethyl-8-ribityllumazine synthase, found in Saccharolobus islandicus (strain M.16.27) (Sulfolobus islandicus).